A 151-amino-acid polypeptide reads, in one-letter code: Large ribosomal subunit protein eL19 (151 aa).

A disordered region spans residues 62–93 (RLKERRKKRSLKSEGKKSGSRKGKKGARANSK). Over residues 79–88 (SGSRKGKKGA) the composition is skewed to basic residues.

This sequence belongs to the eukaryotic ribosomal protein eL19 family. As to quaternary structure, part of the 50S ribosomal subunit.

In terms of biological role, binds to the 23S rRNA. This is Large ribosomal subunit protein eL19 from Saccharolobus solfataricus (strain ATCC 35092 / DSM 1617 / JCM 11322 / P2) (Sulfolobus solfataricus).